The following is a 387-amino-acid chain: MNSSNTGAPEAAQAATLEAFDRRAAEQYLRGQWIAEEHLMRAIGGPRPAGIPYRWEWKSVEVALDEATIALGPVDTARRHLTFVNPGLMDRGSATTHTISAGFQLVKPGEVCWSHRHTMSAVRFVTKGHPDAFTAVDGERLPMEDFDLLITPRFSWHDHHNSGDADVVWLDGLDIGLLQSLGAVFYEPYGDDSQNVRPSSSEGIGTRSHWLRPTWERGRESRLPIRYPWKEVNARLDVYDLDAGTPYDGLALRYANPVTGGPTMATMDCWVQRLAPGFDGKSHRRSSSAITYVISGSGTMVTEDETITFNRGDVISLPNWTNFRWTNDSEIEPVLLFSMHDIPALEAFGLLYEEPEAILNATPAPINPTPSLNPIYRPGAFYDQDEL.

Cupin type-2 domains follow at residues 103–171 (FQLV…VWLD) and 271–337 (VQRL…VLLF).

Homohexamer. The cofactor is Fe(2+).

The catalysed reaction is 1-hydroxy-2-naphthoate + O2 = (3Z)-4-(2-carboxyphenyl)-2-oxobut-3-enoate + H(+). Its function is as follows. Dioxygenase involved in phenanthrene catabolism by mediating cleavage of 1-hydroxy-2-naphthoate. The protein is 1-hydroxy-2-naphthoate 1,2-dioxygenasee (phdI) of Nocardioides sp. (strain KP7).